The chain runs to 634 residues: Probable threonine--tRNA ligase, cytoplasmic (634 aa).

One can recognise a TGS domain in the interval 1–61 (MSIYVTFKGQ…NENQKIELYD (61 aa)).

Belongs to the class-II aminoacyl-tRNA synthetase family.

Its subcellular location is the cytoplasm. The enzyme catalyses tRNA(Thr) + L-threonine + ATP = L-threonyl-tRNA(Thr) + AMP + diphosphate + H(+). The polypeptide is Probable threonine--tRNA ligase, cytoplasmic (Enterocytozoon bieneusi (strain H348) (Microsporidian parasite)).